The chain runs to 232 residues: Large ribosomal subunit protein uL1 (232 aa).

This sequence belongs to the universal ribosomal protein uL1 family. As to quaternary structure, part of the 50S ribosomal subunit.

In terms of biological role, binds directly to 23S rRNA. The L1 stalk is quite mobile in the ribosome, and is involved in E site tRNA release. Functionally, protein L1 is also a translational repressor protein, it controls the translation of the L11 operon by binding to its mRNA. This chain is Large ribosomal subunit protein uL1, found in Alkaliphilus oremlandii (strain OhILAs) (Clostridium oremlandii (strain OhILAs)).